The primary structure comprises 602 residues: Elongation factor 4 (602 aa).

The region spanning Lys-7 to Val-189 is the tr-type G domain. GTP is bound by residues Asp-19–Thr-24 and Asn-136–Asp-139.

Belongs to the TRAFAC class translation factor GTPase superfamily. Classic translation factor GTPase family. LepA subfamily.

The protein localises to the cell inner membrane. It catalyses the reaction GTP + H2O = GDP + phosphate + H(+). Its function is as follows. Required for accurate and efficient protein synthesis under certain stress conditions. May act as a fidelity factor of the translation reaction, by catalyzing a one-codon backward translocation of tRNAs on improperly translocated ribosomes. Back-translocation proceeds from a post-translocation (POST) complex to a pre-translocation (PRE) complex, thus giving elongation factor G a second chance to translocate the tRNAs correctly. Binds to ribosomes in a GTP-dependent manner. The sequence is that of Elongation factor 4 from Coxiella burnetii (strain Dugway 5J108-111).